The sequence spans 1433 residues: DNA-directed RNA polymerase subunit beta' (1433 aa).

Residues cysteine 66, cysteine 68, cysteine 81, and cysteine 84 each contribute to the Zn(2+) site. Positions 328–347 are disordered; the sequence is RKSSAVKTDSNRPLKSLSDS. The segment covering 329-346 has biased composition (polar residues); that stretch reads KSSAVKTDSNRPLKSLSD. The Mg(2+) site is built by aspartate 477, aspartate 479, and aspartate 481. The Zn(2+) site is built by cysteine 825, cysteine 899, cysteine 906, and cysteine 909.

Belongs to the RNA polymerase beta' chain family. As to quaternary structure, the RNAP catalytic core consists of 2 alpha, 1 beta, 1 beta' and 1 omega subunit. When a sigma factor is associated with the core the holoenzyme is formed, which can initiate transcription. Mg(2+) serves as cofactor. Requires Zn(2+) as cofactor.

The catalysed reaction is RNA(n) + a ribonucleoside 5'-triphosphate = RNA(n+1) + diphosphate. Functionally, DNA-dependent RNA polymerase catalyzes the transcription of DNA into RNA using the four ribonucleoside triphosphates as substrates. The chain is DNA-directed RNA polymerase subunit beta' from Christiangramia forsetii (strain DSM 17595 / CGMCC 1.15422 / KT0803) (Gramella forsetii).